We begin with the raw amino-acid sequence, 305 residues long: Ribonuclease BN (305 aa).

Residues H64, H66, D68, H69, H141, D212, and H270 each contribute to the Zn(2+) site. D68 (proton acceptor) is an active-site residue.

The protein belongs to the RNase Z family. RNase BN subfamily. In terms of assembly, homodimer. Zn(2+) is required as a cofactor.

Its function is as follows. Zinc phosphodiesterase, which has both exoribonuclease and endoribonuclease activities. The sequence is that of Ribonuclease BN from Citrobacter koseri (strain ATCC BAA-895 / CDC 4225-83 / SGSC4696).